The primary structure comprises 1040 residues: Kinesin-like protein KIN-14H (1040 aa).

A Calponin-homology (CH) domain is found at 54-176; sequence DLRRYEAARW…CVLALKSYRE (123 aa). Residues 208–242 form a disordered region; sequence SEVPVDAVTNSPSSTPSSEQPLLDQSDSNTKNDGT. Over residues 215 to 242 the composition is skewed to polar residues; that stretch reads VTNSPSSTPSSEQPLLDQSDSNTKNDGT. The 321-residue stretch at 434 to 754 folds into the Kinesin motor domain; it reads SIRVYCRVRP…LKFAERVATV (321 aa). 517–524 contributes to the ATP binding site; it reads GQTGSGKT. Residues 761 to 796 adopt a coiled-coil conformation; that stretch reads VNKDTSEVKELKEQIASLKLALARKESGADQTQLQR. The segment covering 809–818 has biased composition (low complexity); sequence LGVSSSFSKS. 3 disordered regions span residues 809–871, 887–926, and 969–1040; these read LGVS…GKEE, EDEITRSSKPENRAHTQLEKRTSSLKREATRGVDKNKCNS, and MPRP…QNPK. Residues 840-851 show a composition bias toward polar residues; sequence IEGQSDSASSLD. The span at 887 to 923 shows a compositional bias: basic and acidic residues; it reads EDEITRSSKPENRAHTQLEKRTSSLKREATRGVDKNK. Positions 1018–1031 are enriched in polar residues; it reads SPGQTSSRHNNSTV.

This sequence belongs to the TRAFAC class myosin-kinesin ATPase superfamily. Kinesin family. KIN-14 subfamily.

In Arabidopsis thaliana (Mouse-ear cress), this protein is Kinesin-like protein KIN-14H.